A 532-amino-acid polypeptide reads, in one-letter code: Glycerophosphocholine permease GIT4 (532 aa).

The next 6 membrane-spanning stretches (helical) occupy residues 55–75 (LWPA…NAGI), 98–118 (NIGS…GYIS), 126–146 (GMLT…VASW), 150–170 (VQGF…AIGA), 201–221 (AMID…LWIF), and 229–249 (VWRL…FIRL). An N-linked (GlcNAc...) asparagine glycan is attached at Asn266. Residues 272 to 292 (WWLIIKFYWFRLTVVSLIWFI) form a helical membrane-spanning segment. A glycan (N-linked (GlcNAc...) asparagine) is linked at Asn314. Transmembrane regions (helical) follow at residues 321–341 (WGWS…GAFI), 349–369 (LTLA…SACL), and 375–395 (HVAG…FGPG). Asn396 is a glycosylation site (N-linked (GlcNAc...) asparagine). A run of 2 helical transmembrane segments spans residues 416–436 (GIAA…FPAI) and 450–470 (VPFY…IFFV).

It belongs to the major facilitator superfamily. Sugar transporter (TC 2.A.1.1) family.

It localises to the cell membrane. The enzyme catalyses sn-glycerol 3-phosphocholine(out) = sn-glycerol 3-phosphocholine(in). Functionally, glycerophosphodiester transporter that mediates uptake of glycerophosphocholine (GroPCho) with GIT3. Does not possess detectable glycerophosphoinositol (GroPIns) transport activity. The expanded ability to utilize GroPIns and GroPCho results from the organism's pathogenic nature and its need to occupy a variety of environments within its host organism. This possibility is buttressed by the fact that GroPIns and GroPCho are present and abundant in human fluids. The chain is Glycerophosphocholine permease GIT4 from Candida albicans (strain SC5314 / ATCC MYA-2876) (Yeast).